The sequence spans 352 residues: N-acetyl-gamma-glutamyl-phosphate reductase (352 aa).

Cys-158 is an active-site residue.

Belongs to the NAGSA dehydrogenase family. Type 1 subfamily.

Its subcellular location is the cytoplasm. It catalyses the reaction N-acetyl-L-glutamate 5-semialdehyde + phosphate + NADP(+) = N-acetyl-L-glutamyl 5-phosphate + NADPH + H(+). The protein operates within amino-acid biosynthesis; L-arginine biosynthesis; N(2)-acetyl-L-ornithine from L-glutamate: step 3/4. Catalyzes the NADPH-dependent reduction of N-acetyl-5-glutamyl phosphate to yield N-acetyl-L-glutamate 5-semialdehyde. This Mycobacterium bovis (strain BCG / Tokyo 172 / ATCC 35737 / TMC 1019) protein is N-acetyl-gamma-glutamyl-phosphate reductase.